The following is a 483-amino-acid chain: Shutoff alkaline exonuclease (483 aa).

Belongs to the herpesviridae alkaline nuclease family. In terms of assembly, forms a complex with the DNA polymerase, the DNA polymerase processivity factor, and the major DNA binding protein.

It localises to the host nucleus. The protein localises to the host cytoplasm. Functionally, plays a role in processing non linear or branched viral DNA intermediates in order to promote the production of mature packaged unit-length linear progeny viral DNA molecules. Exhibits endonuclease and exonuclease activities and accepts both double-stranded and single-stranded DNA as substrate. Exonuclease digestion of DNA is in the 5'-&gt; 3' direction and the products are 5'-monophosphate nucleosides. Additionally, forms a recombinase with the major DNA-binding protein, which displays strand exchange activity. Also acts as a cytoplasmic RNA endonuclease that induces degradation of the majority of the cellular messenger RNAs during early lytic infection. The resulting inhibition of cellular protein synthesis serves to ensure maximal viral gene expression and evasion from host immune response. Internally cleaves host mRNAs which are then degraded by the cellular exonuclease XRN1. Bypasses therefore the regulatory steps of deadenylation and decapping normally required for XRN1 activation. This Saimiriine herpesvirus 2 (strain 11) (SaHV-2) protein is Shutoff alkaline exonuclease (37).